The primary structure comprises 149 residues: FAD synthase (149 aa).

ATP-binding positions include 10–11, 15–18, Asp-95, and Tyr-123; these read TF and HPGH.

Belongs to the archaeal FAD synthase family. In terms of assembly, homodimer. The cofactor is Co(2+).

It carries out the reaction FMN + ATP + H(+) = FAD + diphosphate. It participates in cofactor biosynthesis; FAD biosynthesis; FAD from FMN: step 1/1. Its activity is regulated as follows. Is inhibited by the product PPi. Catalyzes the transfer of the AMP portion of ATP to flavin mononucleotide (FMN) to produce flavin adenine dinucleotide (FAD) coenzyme. To a lesser extent, is also able to utilize other nucleotides such as CTP and GTP as substrates, producing the modified coenzymes, flavin cytosine dinucleotide (FCD) and flavin guanine dinucleotide (FGD), respectively. Does not catalyze the reverse reaction to produce FMN and ATP from FAD and PPi. Does not function as a glycerol-3-phosphate cytidylyltransferase, as previously annotated in the complete genome. The sequence is that of FAD synthase (ribL) from Methanocaldococcus jannaschii (strain ATCC 43067 / DSM 2661 / JAL-1 / JCM 10045 / NBRC 100440) (Methanococcus jannaschii).